Reading from the N-terminus, the 465-residue chain is BTB/POZ and MATH domain-containing protein 4 (465 aa).

Residues 12 to 40 form a disordered region; sequence LQRQNPLQKSEQQRRNFEMPSPPTTTSLS. The 135-residue stretch at 46–180 folds into the MATH domain; the sequence is NGSHSFTIKG…DDCLKINCTV (135 aa). A BTB domain is found at 216–282; that stretch reads SDITFNVSGE…IYKDALIEDA (67 aa). 2 disordered regions span residues 395-429 and 441-465; these read SGGGGKTRSVWGQFSDGGAETNGRQAQTWGDINGG and VNANGSGRNNNDNNNSDDPMAELED. A compositionally biased stretch (low complexity) spans 442 to 458; sequence NANGSGRNNNDNNNSDD.

This sequence belongs to the Tdpoz family. As to quaternary structure, interacts with RAP2-4. Binds to MYB56 at the promoter of FLOWERING LOCUS T (FT). Ubiquitous.

Its subcellular location is the cytoplasm. The protein operates within protein modification; protein ubiquitination. Functionally, may act as a substrate-specific adapter of an E3 ubiquitin-protein ligase complex (CUL3-RBX1-BTB) which mediates the ubiquitination and subsequent proteasomal degradation of target proteins. The sequence is that of BTB/POZ and MATH domain-containing protein 4 (BPM4) from Arabidopsis thaliana (Mouse-ear cress).